Here is a 162-residue protein sequence, read N- to C-terminus: NADH-quinone oxidoreductase subunit I (162 aa).

4Fe-4S ferredoxin-type domains lie at 53–83 (LRRY…IEAE) and 93–122 (TRYD…EGPN). [4Fe-4S] cluster-binding residues include cysteine 63, cysteine 66, cysteine 69, cysteine 73, cysteine 102, cysteine 105, cysteine 108, and cysteine 112.

Belongs to the complex I 23 kDa subunit family. In terms of assembly, NDH-1 is composed of 14 different subunits. Subunits NuoA, H, J, K, L, M, N constitute the membrane sector of the complex. [4Fe-4S] cluster serves as cofactor.

The protein localises to the cell inner membrane. The catalysed reaction is a quinone + NADH + 5 H(+)(in) = a quinol + NAD(+) + 4 H(+)(out). Its function is as follows. NDH-1 shuttles electrons from NADH, via FMN and iron-sulfur (Fe-S) centers, to quinones in the respiratory chain. The immediate electron acceptor for the enzyme in this species is believed to be ubiquinone. Couples the redox reaction to proton translocation (for every two electrons transferred, four hydrogen ions are translocated across the cytoplasmic membrane), and thus conserves the redox energy in a proton gradient. This Rhodospirillum rubrum (strain ATCC 11170 / ATH 1.1.1 / DSM 467 / LMG 4362 / NCIMB 8255 / S1) protein is NADH-quinone oxidoreductase subunit I.